The sequence spans 469 residues: Neuraminidase (469 aa).

Topologically, residues 1–6 (MNPNQK) are intravirion. The chain crosses the membrane as a helical span at residues 7–27 (LFASSGIAIALGIINLLIGIS). The interval 11-33 (SGIAIALGIINLLIGISNMSLNI) is involved in apical transport and lipid raft association. N28, N32, N46, N55, N56, N65, N66, and N85 each carry an N-linked (GlcNAc...) asparagine; by host glycan. Residues 28-469 (NMSLNISLYS…PDGAQIKYFS (442 aa)) are Virion surface-facing. The hypervariable stalk region stretch occupies residues 36-85 (YSKGENHKSDNLTCTNINQNNTTMVNTYINNTTIIDKNTKMENPGYLLLN). The tract at residues 88 to 469 (LCNVEGWVVI…PDGAQIKYFS (382 aa)) is head of neuraminidase. Disulfide bonds link C89-C417, C121-C126, C181-C228, C230-C235, C276-C289, C278-C287, C316-C334, and C421-C448. R115 provides a ligand contact to substrate. N-linked (GlcNAc...) asparagine; by host glycosylation is present at N143. The Proton donor/acceptor role is filled by D148. Residue R149 coordinates substrate. N-linked (GlcNAc...) asparagine; by host glycans are attached at residues N198 and N232. A substrate-binding site is contributed by 274–275 (EE). Position 290 (R290) interacts with substrate. The Ca(2+) site is built by D291, G295, and D322. N-linked (GlcNAc...) asparagine; by host glycosylation occurs at N356. R369 contacts substrate. N-linked (GlcNAc...) asparagine; by host glycosylation is present at N399. The Nucleophile role is filled by Y403.

The protein belongs to the glycosyl hydrolase 34 family. Homotetramer. Ca(2+) is required as a cofactor. Post-translationally, N-glycosylated.

Its subcellular location is the virion membrane. It localises to the host apical cell membrane. The catalysed reaction is Hydrolysis of alpha-(2-&gt;3)-, alpha-(2-&gt;6)-, alpha-(2-&gt;8)- glycosidic linkages of terminal sialic acid residues in oligosaccharides, glycoproteins, glycolipids, colominic acid and synthetic substrates.. Its activity is regulated as follows. Inhibited by the neuraminidase inhibitors zanamivir (Relenza) and oseltamivir (Tamiflu). These drugs interfere with the release of progeny virus from infected cells and are effective against all influenza strains. Resistance to neuraminidase inhibitors is quite rare. In terms of biological role, catalyzes the removal of terminal sialic acid residues from viral and cellular glycoconjugates. Cleaves off the terminal sialic acids on the glycosylated HA during virus budding to facilitate virus release. Additionally helps virus spread through the circulation by further removing sialic acids from the cell surface. These cleavages prevent self-aggregation and ensure the efficient spread of the progeny virus from cell to cell. Otherwise, infection would be limited to one round of replication. Described as a receptor-destroying enzyme because it cleaves a terminal sialic acid from the cellular receptors. May facilitate viral invasion of the upper airways by cleaving the sialic acid moieties on the mucin of the airway epithelial cells. Likely to plays a role in the budding process through its association with lipid rafts during intracellular transport. May additionally display a raft-association independent effect on budding. Plays a role in the determination of host range restriction on replication and virulence. Sialidase activity in late endosome/lysosome traffic seems to enhance virus replication. This chain is Neuraminidase, found in Influenza A virus (strain A/Equine/Prague/1/1956 H7N7).